We begin with the raw amino-acid sequence, 321 residues long: o-succinylbenzoate synthase (321 aa).

Catalysis depends on lysine 134, which acts as the Proton donor. Mg(2+) is bound by residues aspartate 162, glutamate 191, and aspartate 214. Catalysis depends on lysine 236, which acts as the Proton acceptor.

The protein belongs to the mandelate racemase/muconate lactonizing enzyme family. MenC type 1 subfamily. A divalent metal cation serves as cofactor.

It carries out the reaction (1R,6R)-6-hydroxy-2-succinyl-cyclohexa-2,4-diene-1-carboxylate = 2-succinylbenzoate + H2O. It participates in quinol/quinone metabolism; 1,4-dihydroxy-2-naphthoate biosynthesis; 1,4-dihydroxy-2-naphthoate from chorismate: step 4/7. It functions in the pathway quinol/quinone metabolism; menaquinone biosynthesis. In terms of biological role, converts 2-succinyl-6-hydroxy-2,4-cyclohexadiene-1-carboxylate (SHCHC) to 2-succinylbenzoate (OSB). This chain is o-succinylbenzoate synthase, found in Enterobacter sp. (strain 638).